Reading from the N-terminus, the 101-residue chain is Small ribosomal subunit protein uS14 (101 aa).

Belongs to the universal ribosomal protein uS14 family. As to quaternary structure, part of the 30S ribosomal subunit. Contacts proteins S3 and S10.

Its function is as follows. Binds 16S rRNA, required for the assembly of 30S particles and may also be responsible for determining the conformation of the 16S rRNA at the A site. The chain is Small ribosomal subunit protein uS14 from Rhizorhabdus wittichii (strain DSM 6014 / CCUG 31198 / JCM 15750 / NBRC 105917 / EY 4224 / RW1) (Sphingomonas wittichii).